The chain runs to 644 residues: ATP-dependent zinc metalloprotease FtsH (644 aa).

At 1–4 the chain is on the cytoplasmic side; it reads MAKN. Residues 5–25 traverse the membrane as a helical segment; the sequence is LILWLVIAVVLMSVFQSFGPS. At 26 to 98 the chain is on the periplasmic side; sequence ESNGRKVDYS…VGEPPEEPSL (73 aa). Residues 99 to 119 traverse the membrane as a helical segment; it reads LASIFISWFPMLLLIGVWIFF. Over 120 to 644 the chain is Cytoplasmic; sequence MRQMQGGGGK…NTMSEQLGDK (525 aa). 192–199 serves as a coordination point for ATP; that stretch reads GPPGTGKT. Residue His-414 coordinates Zn(2+). The active site involves Glu-415. Residues His-418 and Asp-492 each coordinate Zn(2+). A disordered region spans residues 598 to 644; it reads VRPPAGWEEPGASNNSGDNGSPKAPRPVDEPRTPNPGNTMSEQLGDK. A compositionally biased stretch (polar residues) spans 632–644; that stretch reads NPGNTMSEQLGDK.

This sequence in the central section; belongs to the AAA ATPase family. It in the C-terminal section; belongs to the peptidase M41 family. Homohexamer. The cofactor is Zn(2+).

The protein resides in the cell inner membrane. Acts as a processive, ATP-dependent zinc metallopeptidase for both cytoplasmic and membrane proteins. Plays a role in the quality control of integral membrane proteins. The protein is ATP-dependent zinc metalloprotease FtsH of Shigella flexneri.